Consider the following 138-residue polypeptide: Transcription antitermination protein NusB (138 aa).

The protein belongs to the NusB family.

Involved in transcription antitermination. Required for transcription of ribosomal RNA (rRNA) genes. Binds specifically to the boxA antiterminator sequence of the ribosomal RNA (rrn) operons. This Coxiella burnetii (strain Dugway 5J108-111) protein is Transcription antitermination protein NusB.